Here is a 470-residue protein sequence, read N- to C-terminus: Negative regulator of sexual conjugation and meiosis (470 aa).

One can recognise a Protein kinase domain in the interval 18–295 (LRFVSIIGAG…ITLPELSTLV (278 aa)). ATP-binding positions include 24–32 (IGAGAYGVV) and K47. Catalysis depends on D143, which acts as the Proton acceptor. A Phosphoserine modification is found at S469.

Belongs to the protein kinase superfamily. Ser/Thr protein kinase family.

The catalysed reaction is L-seryl-[protein] + ATP = O-phospho-L-seryl-[protein] + ADP + H(+). The enzyme catalyses L-threonyl-[protein] + ATP = O-phospho-L-threonyl-[protein] + ADP + H(+). In terms of biological role, this protein is a negative regulator of both sexual conjugation and meiosis. It phosphorylates mei2. It blocks the onset of meiosis until conjugation takes place. This Schizosaccharomyces pombe (strain 972 / ATCC 24843) (Fission yeast) protein is Negative regulator of sexual conjugation and meiosis (ran1).